A 418-amino-acid chain; its full sequence is MLLHESAASMEQSMPENLSTHMYGECEVNPTLAKCPDPVNVDHELPTKESCASTTIVSTSPTSATSTTKVKLSFSVDRLLGSEPEESHRQSSSSPSTKSCCDGSILACCSFPHCFSQANAESRRFGHATLPPTFTPTSSHTYPFVGLDKLFPGPYMDYKSVLRPTPIRAAEHAAPTYPTLATNALLRFHQHQKQQHQQHHHHQHHPKHLHQQHKPPPHNSTTASALLAPLHSLTSLQLTQQQQRFLGKTPQQLLDIAPTSPAAAAAATSQNGAHGHGGGNGQGNASAGSNGKRKRSWSRAVFSNLQRKGLEIQFQQQKYITKPDRRKLAARLNLTDAQVKVWFQNRRMKWRHTRENLKSGQEKQPSAVPESGGVFKTSTPSGDGTPQEALDYSSDSCSSVDLSEQADEDDNIEINVVE.

The segment covering 190 to 216 (QHQKQQHQQHHHHQHHPKHLHQQHKPP) has biased composition (basic residues). Disordered stretches follow at residues 190–223 (QHQK…STTA), 259–296 (TSPA…RKRS), and 354–418 (RENL…NVVE). The span at 259 to 273 (TSPAAAAAATSQNGA) shows a compositional bias: low complexity. Positions 295–354 (RSWSRAVFSNLQRKGLEIQFQQQKYITKPDRRKLAARLNLTDAQVKVWFQNRRMKWRHTR) form a DNA-binding region, homeobox. Positions 391 to 403 (DYSSDSCSSVDLS) are enriched in low complexity.

It belongs to the H2.0 homeobox family. Expressed in cells of the visceral musculature and its anlagen.

It is found in the nucleus. May play a role in pattern formation during embryonic and imaginal development. Is not essential for visceral muscle morphogenesis. The protein is Homeobox protein H2.0 (H2.0) of Drosophila melanogaster (Fruit fly).